The chain runs to 418 residues: 1-deoxy-D-xylulose 5-phosphate reductoisomerase (418 aa).

Residues Thr32, Gly33, Ser34, Ile35, and Asn150 each contribute to the NADPH site. Lys151 lines the 1-deoxy-D-xylulose 5-phosphate pocket. Glu152 lines the NADPH pocket. Asp174 is a Mn(2+) binding site. Residues Ser175, Glu176, Ser200, and His223 each contribute to the 1-deoxy-D-xylulose 5-phosphate site. Position 176 (Glu176) interacts with Mn(2+). Gly229 contributes to the NADPH binding site. Ser236, Asn241, Lys242, and Glu245 together coordinate 1-deoxy-D-xylulose 5-phosphate. Glu245 is a binding site for Mn(2+).

It belongs to the DXR family. Mg(2+) serves as cofactor. Requires Mn(2+) as cofactor.

It catalyses the reaction 2-C-methyl-D-erythritol 4-phosphate + NADP(+) = 1-deoxy-D-xylulose 5-phosphate + NADPH + H(+). It participates in isoprenoid biosynthesis; isopentenyl diphosphate biosynthesis via DXP pathway; isopentenyl diphosphate from 1-deoxy-D-xylulose 5-phosphate: step 1/6. Functionally, catalyzes the NADPH-dependent rearrangement and reduction of 1-deoxy-D-xylulose-5-phosphate (DXP) to 2-C-methyl-D-erythritol 4-phosphate (MEP). In Streptomyces coelicolor (strain ATCC BAA-471 / A3(2) / M145), this protein is 1-deoxy-D-xylulose 5-phosphate reductoisomerase.